The following is a 298-amino-acid chain: CCR4-NOT transcription complex subunit 9 (298 aa).

Belongs to the CNOT9 family. As to quaternary structure, homodimer. Component of the CCR4-NOT complex.

It localises to the nucleus. The protein localises to the cytoplasm. The protein resides in the P-body. Its function is as follows. Component of the CCR4-NOT complex which is one of the major cellular mRNA deadenylases and is linked to various cellular processes including bulk mRNA degradation, miRNA-mediated repression, translational repression during translational initiation and general transcription regulation. Additional complex functions may be a consequence of its influence on mRNA expression. Involved in down-regulation of MYB- and JUN-dependent transcription. Enhances ligand-dependent transcriptional activity of nuclear hormone receptors. May play a role in cell differentiation. This Danio rerio (Zebrafish) protein is CCR4-NOT transcription complex subunit 9.